We begin with the raw amino-acid sequence, 450 residues long: UDP-N-acetylmuramoylalanine--D-glutamate ligase (450 aa).

Glycine 119–threonine 125 is an ATP binding site.

The protein belongs to the MurCDEF family.

The protein resides in the cytoplasm. The enzyme catalyses UDP-N-acetyl-alpha-D-muramoyl-L-alanine + D-glutamate + ATP = UDP-N-acetyl-alpha-D-muramoyl-L-alanyl-D-glutamate + ADP + phosphate + H(+). It participates in cell wall biogenesis; peptidoglycan biosynthesis. Its function is as follows. Cell wall formation. Catalyzes the addition of glutamate to the nucleotide precursor UDP-N-acetylmuramoyl-L-alanine (UMA). The chain is UDP-N-acetylmuramoylalanine--D-glutamate ligase from Streptococcus pneumoniae (strain JJA).